A 320-amino-acid chain; its full sequence is Beta-carotene 3-hydroxylase, chloroplastic (320 aa).

A chloroplast-targeting transit peptide spans 1–78 (METQFLVSGR…EKELRGKLVV (78 aa)). 2 helical membrane passes run 118-138 (YLVA…LSVY) and 152-172 (LSEM…MEFW). Residues 165–292 (AAVGMEFWAR…KFNGVPYGLF (128 aa)) enclose the Fatty acid hydroxylase domain. The short motif at 177-182 (HEALWH) is the Histidine box-1 element. A Histidine box-2 motif is present at residues 189 to 193 (HESHH). 2 consecutive transmembrane segments (helical) span residues 204–224 (DIFA…GFFH) and 228–248 (IPGL…AYMF). The Histidine box-3 signature appears at 250-255 (HDGLVH). The Histidine box-4 signature appears at 276 to 280 (HTLHH).

Belongs to the sterol desaturase family.

It localises to the plastid. The protein resides in the chloroplast membrane. The catalysed reaction is all-trans-beta-carotene + 4 reduced [2Fe-2S]-[ferredoxin] + 2 O2 + 4 H(+) = all-trans-zeaxanthin + 4 oxidized [2Fe-2S]-[ferredoxin] + 2 H2O. Its function is as follows. Nonheme diiron monooxygenase involved in the biosynthesis of xanthophylls. Specific for beta-ring hydroxylations of beta-carotene. Uses ferredoxin as an electron donor. This is Beta-carotene 3-hydroxylase, chloroplastic (BHY) from Gentiana lutea (Yellow gentian).